The chain runs to 230 residues: Ribose-5-phosphate isomerase A (230 aa).

Substrate-binding positions include 31-34 (TGST), 88-91 (DGSD), and 101-104 (KGGG). E110 acts as the Proton acceptor in catalysis. A substrate-binding site is contributed by K128.

Belongs to the ribose 5-phosphate isomerase family. As to quaternary structure, homodimer.

The catalysed reaction is aldehydo-D-ribose 5-phosphate = D-ribulose 5-phosphate. It participates in carbohydrate degradation; pentose phosphate pathway; D-ribose 5-phosphate from D-ribulose 5-phosphate (non-oxidative stage): step 1/1. Catalyzes the reversible conversion of ribose-5-phosphate to ribulose 5-phosphate. This is Ribose-5-phosphate isomerase A from Lactobacillus helveticus (strain DPC 4571).